The following is a 204-amino-acid chain: Holliday junction branch migration complex subunit RuvA (204 aa).

Positions 1-64 (MIGHLTGRLV…EDAHLLFGFS (64 aa)) are domain I. The segment at 65–143 (QKTDRTLFRE…GIQQEDFFIE (79 aa)) is domain II. The tract at residues 144–155 (SQHLKQPEHALN) is flexible linker. The segment at 156–204 (EQDIPASEAISALIALGYKAAEAEKLVKKISKPALSSEQLIREALKAAL) is domain III.

This sequence belongs to the RuvA family. As to quaternary structure, homotetramer. Forms an RuvA(8)-RuvB(12)-Holliday junction (HJ) complex. HJ DNA is sandwiched between 2 RuvA tetramers; dsDNA enters through RuvA and exits via RuvB. An RuvB hexamer assembles on each DNA strand where it exits the tetramer. Each RuvB hexamer is contacted by two RuvA subunits (via domain III) on 2 adjacent RuvB subunits; this complex drives branch migration. In the full resolvosome a probable DNA-RuvA(4)-RuvB(12)-RuvC(2) complex forms which resolves the HJ.

The protein resides in the cytoplasm. Functionally, the RuvA-RuvB-RuvC complex processes Holliday junction (HJ) DNA during genetic recombination and DNA repair, while the RuvA-RuvB complex plays an important role in the rescue of blocked DNA replication forks via replication fork reversal (RFR). RuvA specifically binds to HJ cruciform DNA, conferring on it an open structure. The RuvB hexamer acts as an ATP-dependent pump, pulling dsDNA into and through the RuvAB complex. HJ branch migration allows RuvC to scan DNA until it finds its consensus sequence, where it cleaves and resolves the cruciform DNA. The protein is Holliday junction branch migration complex subunit RuvA of Pasteurella multocida (strain Pm70).